Here is a 119-residue protein sequence, read N- to C-terminus: Putative arsenical resistance operon repressor ArsR2 (119 aa).

The HTH arsR-type domain maps to 24–119 (VDSDAMATDL…TLDDLRGNHE (96 aa)). Residues 60–83 (VCDLEATVGVSQSAVSQALSRLYT) constitute a DNA-binding region (H-T-H motif).

In terms of biological role, transcriptional repressor for the arsR2M operon. The protein is Putative arsenical resistance operon repressor ArsR2 (arsR2) of Halobacterium salinarum (strain ATCC 700922 / JCM 11081 / NRC-1) (Halobacterium halobium).